Here is a 321-residue protein sequence, read N- to C-terminus: Methyltransferase cfoB (321 aa).

The protein belongs to the methyltransferase superfamily.

It participates in secondary metabolite biosynthesis; flavonoid biosynthesis. Its function is as follows. Methyltransferase; part of the gene cluster that mediates the biosynthesis of chlorflavonin, a fungal flavonoid with acetolactate synthase inhibitory activity. Within the pathway, cfoB is responsible for the methylation at position C7-OH of flavonoid. The pathway begins with the PKS-NRPS hybrid synthetase cfoA that uses benzoic acid or p-hydroxybenzoic acid as a starter unit with four rounds of chain elongation using malonyl-CoA to form the chalcone skeleton. Then, a new type of chalcone isomerase, cfoK, catalyzes the conversion of the chalcone into a flavanone by a histidine-mediated oxa-Michael addition mechanism. The desaturation of flavanone to flavone is catalyzed by a new type of flavone synthase, the flavin mononucleotide (FMN)-dependent oxidoreductase cfoJ. Monooxygenases cfoF, cfoG, and P450 cfoH are responsible for the hydroxylation of the flavonoid skeleton at sites C3, C8, and C2', respectively. Like cfoF, the dehydratase cfoI also plays a role in the hydroxylation of position C3. Methyltransferases cfoB, cfoC, and cfoD then catalyze the methylation of C7-OH, C8-OH, and C3-OH, respectively. Finally, the monooxygenase cfoE is responsible for the chlorination of flavonoid at position C3'. In Aspergillus candidus, this protein is Methyltransferase cfoB.